The chain runs to 595 residues: Adenine deaminase 2 (595 aa).

This sequence belongs to the metallo-dependent hydrolases superfamily. Adenine deaminase family. It depends on Mn(2+) as a cofactor.

The catalysed reaction is adenine + H2O + H(+) = hypoxanthine + NH4(+). This Rhizobium johnstonii (strain DSM 114642 / LMG 32736 / 3841) (Rhizobium leguminosarum bv. viciae) protein is Adenine deaminase 2.